We begin with the raw amino-acid sequence, 254 residues long: Ribonuclease 3 (254 aa).

In terms of domain architecture, RNase III spans 24 to 154 (LRRLQETLGV…VIGALFLDSG (131 aa)). Position 67 (Glu-67) interacts with Mg(2+). Residue Asp-71 is part of the active site. Residues Asp-140 and Glu-143 each contribute to the Mg(2+) site. Glu-143 is an active-site residue. In terms of domain architecture, DRBM spans 181–250 (DYKSTLQVLA…ARLAWEQLSG (70 aa)).

The protein belongs to the ribonuclease III family. As to quaternary structure, homodimer. Mg(2+) is required as a cofactor.

It is found in the cytoplasm. The enzyme catalyses Endonucleolytic cleavage to 5'-phosphomonoester.. Functionally, digests double-stranded RNA. Involved in the processing of primary rRNA transcript to yield the immediate precursors to the large and small rRNAs (23S and 16S). Processes some mRNAs, and tRNAs when they are encoded in the rRNA operon. Processes pre-crRNA and tracrRNA of type II CRISPR loci if present in the organism. The chain is Ribonuclease 3 from Treponema pallidum (strain Nichols).